The following is a 189-amino-acid chain: HGPRTase-like protein 2 (189 aa).

Belongs to the purine/pyrimidine phosphoribosyltransferase family. Archaeal HPRT subfamily.

In terms of biological role, may catalyze a purine salvage reaction, the substrate is unknown. In Halalkalicoccus jeotgali (strain DSM 18796 / CECT 7217 / JCM 14584 / KCTC 4019 / B3), this protein is HGPRTase-like protein 2.